A 296-amino-acid chain; its full sequence is Cytidine deaminase (296 aa).

CMP/dCMP-type deaminase domains follow at residues 52–167 and 191–296; these read SPVE…YLPD and QGHD…YISL. 93 to 95 lines the substrate pocket; the sequence is NQE. Zn(2+) is bound at residue His-106. Glu-108 acts as the Proton donor in catalysis. Residues Cys-133 and Cys-136 each contribute to the Zn(2+) site.

It belongs to the cytidine and deoxycytidylate deaminase family. Homodimer. Zn(2+) is required as a cofactor.

It carries out the reaction cytidine + H2O + H(+) = uridine + NH4(+). The enzyme catalyses 2'-deoxycytidine + H2O + H(+) = 2'-deoxyuridine + NH4(+). Functionally, this enzyme scavenges exogenous and endogenous cytidine and 2'-deoxycytidine for UMP synthesis. The sequence is that of Cytidine deaminase from Mannheimia succiniciproducens (strain KCTC 0769BP / MBEL55E).